The sequence spans 76 residues: Horsegram inhibitor 1 (76 aa).

Intrachain disulfides connect cysteine 16–cysteine 70, cysteine 17–cysteine 32, cysteine 20–cysteine 66, cysteine 22–cysteine 30, cysteine 40–cysteine 47, cysteine 44–cysteine 59, and cysteine 49–cysteine 57.

It belongs to the Bowman-Birk serine protease inhibitor family. HGI-III exists in a state of equilibrium between monomer, homodimer and trimer, with homodimer being the predominant form. The homodimer is stabilized by the non-covalent interaction between Lys-24 of one subunit and Asp-76 of the other subunit. The homodimer is more thermostable than the monomer. HGGI-I, HGGI-II and HGGI-III exist as monomers. Post-translationally, HGGI-I, HGGI-II and HGGI-III are produced by proteolysis of the N- and C-termini of HGI-III.

Inhibitors of trypsin and chymotrypsin. HGGI-III has a higher activity than HGGI-I or HGGI-II. This is Horsegram inhibitor 1 from Vigna unguiculata subsp. cylindrica (Horse gram).